A 347-amino-acid polypeptide reads, in one-letter code: Cannabinoid receptor 2 (347 aa).

Residues 1–33 (MEGCRETEVTNGSNGGLEFNPMKEYMILSSGQQ) lie on the Extracellular side of the membrane. N11 is a glycosylation site (N-linked (GlcNAc...) asparagine). Residues 34 to 59 (IAVAVLCTLMGLLSALENMAVLYIIL) form a helical membrane-spanning segment. Residues 60-71 (SSRRLRRKPSYL) lie on the Cytoplasmic side of the membrane. The helical transmembrane segment at 72 to 92 (FISSLAGADFLASVIFACNFV) threads the bilayer. The Extracellular portion of the chain corresponds to 93-104 (IFHVFHGVDSNA). Residues 105–129 (IFLLKIGSVTMTFTASVGSLLLTAV) form a helical membrane-spanning segment. Residues 130–149 (DRYLCLCYPPTYKALVTRGR) lie on the Cytoplasmic side of the membrane. The helical transmembrane segment at 150–172 (ALVALCVMWVLSALISYLPLMGW) threads the bilayer. At 173-188 (TCCPSPCSELFPLIPN) the chain is on the extracellular side. The helical transmembrane segment at 189–214 (DYLLGWLLFIAILFSGIIYTYGYVLW) threads the bilayer. Topologically, residues 215–246 (KAHRHVATLAEHQDRQVPGIARMRLDVRLAKT) are cytoplasmic. A helical membrane pass occupies residues 247-267 (LGLVLAVLLICWFPALALMGH). Topologically, residues 268–279 (SLVTTLSDQVKE) are extracellular. Residues 280–301 (AFAFCSMLCLVNSMVNPIIYAL) traverse the membrane as a helical segment. Residues 302–347 (RSGEIRSAAQHCLIGWKKYLQGLGPEGKEEGPRSSVTETEADVKTT) lie on the Cytoplasmic side of the membrane. Residues 326-347 (PEGKEEGPRSSVTETEADVKTT) form a disordered region. 2 positions are modified to phosphoserine: S335 and S336. Phosphothreonine is present on T338.

Belongs to the G-protein coupled receptor 1 family. Expressed by cells of hematopoietic origin. Expressed in skin in suprabasal layers and hair follicles, in brain by neurons and glial cells and by osteoblasts, osteocytes, osteoclasts (at protein level).

It is found in the cell membrane. The protein localises to the cell projection. The protein resides in the dendrite. Its subcellular location is the perikaryon. Heterotrimeric G protein-coupled receptor for endocannabinoid 2-arachidonoylglycerol mediating inhibition of adenylate cyclase. May function in inflammatory response, nociceptive transmission and bone homeostasis. This chain is Cannabinoid receptor 2 (Cnr2), found in Mus musculus (Mouse).